The chain runs to 293 residues: Ribosomal protein L11 methyltransferase (293 aa).

The S-adenosyl-L-methionine site is built by Thr-145, Gly-166, Asp-188, and Asn-230.

It belongs to the methyltransferase superfamily. PrmA family.

Its subcellular location is the cytoplasm. The enzyme catalyses L-lysyl-[protein] + 3 S-adenosyl-L-methionine = N(6),N(6),N(6)-trimethyl-L-lysyl-[protein] + 3 S-adenosyl-L-homocysteine + 3 H(+). Methylates ribosomal protein L11. This is Ribosomal protein L11 methyltransferase from Shewanella putrefaciens (strain CN-32 / ATCC BAA-453).